Consider the following 356-residue polypeptide: Protein RecA (356 aa).

77 to 84 (GPESSGKT) is a binding site for ATP.

It belongs to the RecA family.

The protein resides in the cytoplasm. Functionally, can catalyze the hydrolysis of ATP in the presence of single-stranded DNA, the ATP-dependent uptake of single-stranded DNA by duplex DNA, and the ATP-dependent hybridization of homologous single-stranded DNAs. It interacts with LexA causing its activation and leading to its autocatalytic cleavage. This is Protein RecA from Caulobacter vibrioides (strain ATCC 19089 / CIP 103742 / CB 15) (Caulobacter crescentus).